The primary structure comprises 673 residues: DNA ligase (673 aa).

NAD(+) contacts are provided by residues 36 to 40 (DAEYD), 85 to 86 (SL), and glutamate 116. The active-site N6-AMP-lysine intermediate is lysine 118. NAD(+)-binding residues include arginine 139, glutamate 176, lysine 291, and lysine 315. Residues cysteine 409, cysteine 412, cysteine 427, and cysteine 433 each contribute to the Zn(2+) site. The 82-residue stretch at 592-673 (RGEQPLAGRT…LQALLQEHGR (82 aa)) folds into the BRCT domain.

This sequence belongs to the NAD-dependent DNA ligase family. LigA subfamily. Requires Mg(2+) as cofactor. Mn(2+) is required as a cofactor.

It carries out the reaction NAD(+) + (deoxyribonucleotide)n-3'-hydroxyl + 5'-phospho-(deoxyribonucleotide)m = (deoxyribonucleotide)n+m + AMP + beta-nicotinamide D-nucleotide.. Functionally, DNA ligase that catalyzes the formation of phosphodiester linkages between 5'-phosphoryl and 3'-hydroxyl groups in double-stranded DNA using NAD as a coenzyme and as the energy source for the reaction. It is essential for DNA replication and repair of damaged DNA. This Alkalilimnicola ehrlichii (strain ATCC BAA-1101 / DSM 17681 / MLHE-1) protein is DNA ligase.